The primary structure comprises 483 residues: Protein hedgehog (483 aa).

The N-terminal stretch at 1 to 19 is a signal peptide; sequence MDNQTVAAIWSCASATCLS. Positions 20 to 92 are excised as a propeptide; sequence LDAKRHSVET…LALNFRHAHS (73 aa). The tract at residues 28 to 57 is disordered; that stretch reads ETNTNDRQAPPGLSNSNNNNNNNKSTAVDA. The segment covering 41-50 has biased composition (low complexity); the sequence is SNSNNNNNNN. C93 is lipidated: N-palmitoyl cysteine. 7 residues coordinate Ca(2+): E157, E158, D163, T193, E194, D197, and D199. G266 is lipidated: Cholesterol glycine ester.

This sequence belongs to the hedgehog family. Interacts with shf. Post-translationally, the C-terminal part of the hedgehog protein precursor displays an autoproteolysis activity that results in the cleavage of the full-length protein into two parts (N-product and C-product). In addition, the C-terminal part displays a cholesterol transferase activity that results by the covalent attachment of a cholesterol moiety to the C-terminal of the newly generated N-product. The N-product is the active species in both local and long-range signaling, whereas the C-product has no signaling activity. Cholesterylation is required for N-product targeting to lipid rafts and multimerization. In terms of processing, N-palmitoylation by Rasp of the hedgehog N-product, within the secretory pathway, is required for the embryonic and larval patterning activities of the hedgehog signal.

It localises to the nucleus. Its subcellular location is the cytoplasm. It is found in the cell membrane. The catalysed reaction is glycyl-L-cysteinyl-[protein] + cholesterol + H(+) = [protein]-C-terminal glycyl cholesterol ester + N-terminal L-cysteinyl-[protein]. Its function is as follows. The C-terminal part of the hedgehog protein precursor displays an autoproteolysis activity that results in the cleavage of the full-length protein into two parts (N-product and C-product). In addition, the C-terminal part displays a cholesterol transferase activity that results by the covalent attachment of a cholesterol moiety to the C-terminal of the newly generated N-product. Once cleaved, the C-product has no signaling activity and diffuses from the cell. Functionally, the dually lipidated hedgehog protein N-product is a morphogen which is essential for a variety of patterning events during development. Establishes the anterior-posterior axis of the embryonic segments and patterns the larval imaginal disks. Binds to the patched (ptc) receptor, which functions in association with smoothened (smo), to activate the transcription of target genes wingless (wg), decapentaplegic (dpp) and ptc. In the absence of hh, ptc represses the constitutive signaling activity of smo through fused (fu). Essential component of a signaling pathway which regulates the Duox-dependent gut immune response to bacterial uracil; required to activate Cad99C-dependent endosome formation, norpA-dependent Ca2+ mobilization and p38 MAPK, which are essential steps in the Duox-dependent production of reactive oxygen species (ROS) in response to intestinal bacterial infection. During photoreceptor differentiation, it up-regulates transcription of Ubr3, which in turn promotes the hh-signaling pathway by mediating the ubiquitination and degradation of cos. The protein is Protein hedgehog of Drosophila virilis (Fruit fly).